The following is a 110-amino-acid chain: Acylphosphatase (110 aa).

The 87-residue stretch at 24–110 (RVRVYVSGRV…SGGARGFEVR (87 aa)) folds into the Acylphosphatase-like domain. Catalysis depends on residues Arg-39 and Asn-57.

The protein belongs to the acylphosphatase family.

The catalysed reaction is an acyl phosphate + H2O = a carboxylate + phosphate + H(+). The chain is Acylphosphatase (acyP) from Rubrobacter xylanophilus (strain DSM 9941 / JCM 11954 / NBRC 16129 / PRD-1).